The chain runs to 314 residues: Putative S-adenosyl-L-methionine-dependent methyltransferase MMAR_5323 (314 aa).

Residues D132 and 161-162 (DL) contribute to the S-adenosyl-L-methionine site.

This sequence belongs to the UPF0677 family.

Exhibits S-adenosyl-L-methionine-dependent methyltransferase activity. In Mycobacterium marinum (strain ATCC BAA-535 / M), this protein is Putative S-adenosyl-L-methionine-dependent methyltransferase MMAR_5323.